Consider the following 160-residue polypeptide: Major pollen allergen Bet v 1-J (160 aa).

Residues lysine 55, tyrosine 82, tyrosine 84, and asparagine 101 each coordinate brassinolide. 2 hydrophobic ligand pocket regions span residues 116–118 (KIN) and 133–141 (QIKASKEMG).

Belongs to the BetVI family. As to expression, pollen.

It is found in the cytoplasm. Functionally, may be a general steroid carrier protein. The protein is Major pollen allergen Bet v 1-J of Betula pendula (European white birch).